We begin with the raw amino-acid sequence, 347 residues long: NADH-quinone oxidoreductase subunit H (347 aa).

9 helical membrane-spanning segments follow: residues 13-33 (IIMI…IAYV), 50-70 (PNVV…KFVF), 82-102 (AVFL…WAVV), 115-135 (VGIL…IMGG), 161-181 (IGFV…TDIV), 198-218 (FLDW…ISAL), 263-283 (CSLT…IWIL), 286-306 (VPGI…FAMV), and 321-341 (LGWK…AFVL).

This sequence belongs to the complex I subunit 1 family. NDH-1 is composed of 14 different subunits. Subunits NuoA, H, J, K, L, M, N constitute the membrane sector of the complex.

The protein resides in the cell inner membrane. It catalyses the reaction a quinone + NADH + 5 H(+)(in) = a quinol + NAD(+) + 4 H(+)(out). Functionally, NDH-1 shuttles electrons from NADH, via FMN and iron-sulfur (Fe-S) centers, to quinones in the respiratory chain. The immediate electron acceptor for the enzyme in this species is believed to be ubiquinone. Couples the redox reaction to proton translocation (for every two electrons transferred, four hydrogen ions are translocated across the cytoplasmic membrane), and thus conserves the redox energy in a proton gradient. This subunit may bind ubiquinone. The polypeptide is NADH-quinone oxidoreductase subunit H (Rhizobium leguminosarum bv. trifolii (strain WSM2304)).